Here is a 370-residue protein sequence, read N- to C-terminus: Platelet-derived growth factor D (370 aa).

Positions 1 to 18 (MHRLIFVCTLVCANFCSC) are cleaved as a signal peptide. One can recognise a CUB domain in the interval 52 to 170 (RDETIQVRGN…PGFKIYYSLL (119 aa)). An intrachain disulfide couples Cys109 to Cys131. A glycan (N-linked (GlcNAc...) asparagine) is linked at Asn276. 2 disulfides stabilise this stretch: Cys302/Cys360 and Cys306/Cys362.

The protein belongs to the PDGF/VEGF growth factor family. In terms of assembly, homodimer; disulfide-linked. Interacts with PDGFRB homodimers, and with heterodimers formed by PDGFRA and PDGFRB. In terms of processing, activated by proteolytic cleavage. Proteolytic removal of the N-terminal CUB domain releasing the core domain is necessary for unmasking the receptor-binding epitopes of the core domain. Cleavage after Arg-247 or Arg-249 by urokinase plasminogen activator gives rise to the active form.

It is found in the secreted. Functionally, growth factor that plays an essential role in the regulation of embryonic development, cell proliferation, cell migration, survival and chemotaxis. Potent mitogen for cells of mesenchymal origin. Plays an important role in wound healing. Induces macrophage recruitment, increased interstitial pressure, and blood vessel maturation during angiogenesis. Can initiate events that lead to a mesangial proliferative glomerulonephritis, including influx of monocytes and macrophages and production of extracellular matrix. The chain is Platelet-derived growth factor D (PDGFD) from Pongo abelii (Sumatran orangutan).